A 223-amino-acid polypeptide reads, in one-letter code: Respiratory supercomplex factor 1, mitochondrial (223 aa).

In terms of domain architecture, HIG1 spans 7–98; that stretch reads QGLTWGPRRD…EDRNKRKELG (92 aa). The next 2 helical transmembrane spans lie at 34–53 and 66–88; these read PLVP…AYRA and FRAR…MYYA. Positions 87–139 form a coiled coil; the sequence is YAEDRNKRKELGKLKQQQEAEEKRQKWIRELEARDEEEKALQEMMDKKRKRAS. Composition is skewed to basic and acidic residues over residues 121-132, 159-188, and 208-223; these read DEEEKALQEMMD, AFKD…EKKP, and PAKD…ESSS. Residues 121–223 are disordered; the sequence is DEEEKALQEM…GKNLDSESSS (103 aa).

It belongs to the RCF1 family. As to quaternary structure, associates with the respiratory chain complex III/complex IV supercomplex.

It localises to the mitochondrion membrane. Cytochrome c oxidase subunit which plays a role in assembly of respiratory supercomplexes. The chain is Respiratory supercomplex factor 1, mitochondrial (RCF1) from Chaetomium globosum (strain ATCC 6205 / CBS 148.51 / DSM 1962 / NBRC 6347 / NRRL 1970) (Soil fungus).